The following is a 261-amino-acid chain: Acetylglutamate kinase (261 aa).

Substrate is bound by residues 46-47, Arg-68, and Asn-160; that span reads GG.

The protein belongs to the acetylglutamate kinase family. ArgB subfamily.

Its subcellular location is the cytoplasm. The enzyme catalyses N-acetyl-L-glutamate + ATP = N-acetyl-L-glutamyl 5-phosphate + ADP. It functions in the pathway amino-acid biosynthesis; L-arginine biosynthesis; N(2)-acetyl-L-ornithine from L-glutamate: step 2/4. Functionally, catalyzes the ATP-dependent phosphorylation of N-acetyl-L-glutamate. In Shewanella loihica (strain ATCC BAA-1088 / PV-4), this protein is Acetylglutamate kinase.